Consider the following 209-residue polypeptide: Uridine kinase (209 aa).

Residue 16–23 participates in ATP binding; that stretch reads GGSGSGKT.

The protein belongs to the uridine kinase family.

The protein resides in the cytoplasm. The enzyme catalyses uridine + ATP = UMP + ADP + H(+). It carries out the reaction cytidine + ATP = CMP + ADP + H(+). It participates in pyrimidine metabolism; CTP biosynthesis via salvage pathway; CTP from cytidine: step 1/3. Its pathway is pyrimidine metabolism; UMP biosynthesis via salvage pathway; UMP from uridine: step 1/1. The chain is Uridine kinase from Lactiplantibacillus plantarum (strain ATCC BAA-793 / NCIMB 8826 / WCFS1) (Lactobacillus plantarum).